The primary structure comprises 249 residues: GTP cyclohydrolase 1 type 2 homolog (249 aa).

Residues H64, H65, D102, H217, and E221 each coordinate a divalent metal cation.

This sequence belongs to the GTP cyclohydrolase I type 2/NIF3 family. As to quaternary structure, homohexamer.

This Neisseria meningitidis serogroup B (strain ATCC BAA-335 / MC58) protein is GTP cyclohydrolase 1 type 2 homolog.